The sequence spans 723 residues: Heme/hemopexin utilization protein C (723 aa).

Residues 1 to 21 (MRFSKLSLAITTTLVTANALA) form the signal peptide. The TBDR plug domain occupies 36–147 (DPSRFAYTPE…LGGVVAMRTP (112 aa)). Residues 158 to 723 (KFGVKIRQGY…NAKISAVYSF (566 aa)) form the TBDR beta-barrel domain. The TonB C-terminal box signature appears at 706–723 (SLMEGTGRNAKISAVYSF).

This sequence belongs to the TonB-dependent receptor family.

The protein resides in the cell outer membrane. Functionally, required for utilization of free heme at low concentrations. This is Heme/hemopexin utilization protein C (hxuC) from Haemophilus influenzae (strain ATCC 51907 / DSM 11121 / KW20 / Rd).